The chain runs to 319 residues: Ribosomal RNA small subunit methyltransferase H (319 aa).

Residues 39–41 (GGH), D59, F83, D104, and Q111 each bind S-adenosyl-L-methionine.

The protein belongs to the methyltransferase superfamily. RsmH family.

Its subcellular location is the cytoplasm. It catalyses the reaction cytidine(1402) in 16S rRNA + S-adenosyl-L-methionine = N(4)-methylcytidine(1402) in 16S rRNA + S-adenosyl-L-homocysteine + H(+). In terms of biological role, specifically methylates the N4 position of cytidine in position 1402 (C1402) of 16S rRNA. The polypeptide is Ribosomal RNA small subunit methyltransferase H (Ralstonia pickettii (strain 12D)).